Reading from the N-terminus, the 123-residue chain is Ribonuclease P protein component (123 aa).

Belongs to the RnpA family. Consists of a catalytic RNA component (M1 or rnpB) and a protein subunit.

It catalyses the reaction Endonucleolytic cleavage of RNA, removing 5'-extranucleotides from tRNA precursor.. Functionally, RNaseP catalyzes the removal of the 5'-leader sequence from pre-tRNA to produce the mature 5'-terminus. It can also cleave other RNA substrates such as 4.5S RNA. The protein component plays an auxiliary but essential role in vivo by binding to the 5'-leader sequence and broadening the substrate specificity of the ribozyme. The sequence is that of Ribonuclease P protein component from Streptomyces avermitilis (strain ATCC 31267 / DSM 46492 / JCM 5070 / NBRC 14893 / NCIMB 12804 / NRRL 8165 / MA-4680).